The primary structure comprises 753 residues: 5-methyltetrahydropteroyltriglutamate--homocysteine methyltransferase (753 aa).

5-methyltetrahydropteroyltri-L-glutamate-binding positions include 17–20 and K117; that span reads RELK. L-homocysteine is bound by residues 431–433 and E484; that span reads IGS. Residues 431–433 and E484 contribute to the L-methionine site; that span reads IGS. 5-methyltetrahydropteroyltri-L-glutamate-binding positions include 515–516 and W561; that span reads RC. Residue D599 coordinates L-homocysteine. Residue D599 participates in L-methionine binding. E605 provides a ligand contact to 5-methyltetrahydropteroyltri-L-glutamate. 3 residues coordinate Zn(2+): H641, C643, and E665. H694 acts as the Proton donor in catalysis. C726 is a Zn(2+) binding site.

The protein belongs to the vitamin-B12 independent methionine synthase family. Requires Zn(2+) as cofactor.

It catalyses the reaction 5-methyltetrahydropteroyltri-L-glutamate + L-homocysteine = tetrahydropteroyltri-L-glutamate + L-methionine. Its pathway is amino-acid biosynthesis; L-methionine biosynthesis via de novo pathway; L-methionine from L-homocysteine (MetE route): step 1/1. In terms of biological role, catalyzes the transfer of a methyl group from 5-methyltetrahydrofolate to homocysteine resulting in methionine formation. The chain is 5-methyltetrahydropteroyltriglutamate--homocysteine methyltransferase from Shigella boydii serotype 4 (strain Sb227).